Consider the following 486-residue polypeptide: Flavin-dependent monooxygenase pboD (486 aa).

Positions 51, 65, and 124 each coordinate FAD. Arg-203 is a catalytic residue. Asp-344 and Gly-357 together coordinate FAD.

It belongs to the paxM FAD-dependent monooxygenase family. It depends on FAD as a cofactor.

The protein operates within secondary metabolite biosynthesis. Flavin-dependent monooxygenase; part of the gene cluster that mediates the biosynthesis of protubonine B, a hydroxylated and diacetylated cyclo-L-Trp-L-Leu derivative. Within the pathway, pboD catalyzes the hydroxylation at C-3 of the indole ring of cyclo-L-Trp-L-Leu and subsequent formation of the pyrrolidine ring, eading to the production of protubonine D. PboD is also able to accept other cyclodipeptides (CDPs) as substrates, including cyclo-L-Trp-L-Trp, cyclo-L-Trp-L-Tyr, cyclo-L-Trp-L-Phe, cyclo-L-Trp-L-Met, cyclo-L-Trp-L-Ala, cyclo-L-Trp-L-Pro and cyclo-L-Trp-Gly. Assays with cyclo-L-Trp-L-Trp, cyclo-L-Trp-L-Tyr, cyclo-L-Trp-L-Phe show similar or even slightly higher conversion yields, compared with that of the natural substrate cyclo-L-Trp-L-Leu, whereas cyclo-L-Trp-L-Pro and cyclo-L-Trp-Gly are accepted by PboD but only with conversion yields of 10 and 4%, respectively. Cyclo-L-Trp-L-His is not accepted as a substrate. The first step of the protubonine B synthesis is performed by the nonribosomal peptide synthetase pboA that catalyzes the formation of cyclo-L-Trp-L-Leu by condensing L-Leu with L-Trp. The flavin-dependent monooxygenase pboD is responsible for hydroxylation at C-3 of the indole ring and subsequent formation of the pyrrolidine ring, leadind to protubonine D. Protubonine D is further diacetylated by two acetyltransferases, pboB and pboC, to form the final product protubonine B via protubonine C. The sequence is that of Flavin-dependent monooxygenase pboD from Aspergillus ustus.